We begin with the raw amino-acid sequence, 364 residues long: Heat-inducible transcription repressor HrcA (364 aa).

Belongs to the HrcA family.

Its function is as follows. Negative regulator of class I heat shock genes (grpE-dnaK-dnaJ and groELS operons). Prevents heat-shock induction of these operons. The protein is Heat-inducible transcription repressor HrcA of Cyanothece sp. (strain PCC 7425 / ATCC 29141).